The primary structure comprises 455 residues: Probable xyloglucan galactosyltransferase GT17 (455 aa).

At 1 to 34 the chain is on the cytoplasmic side; the sequence is MTFNKRQVKINHWPEKNDKEKQKYSKNRETVKLT. Residues 35-55 traverse the membrane as a helical; Signal-anchor for type II membrane protein segment; the sequence is LLTLLLLCSICFLFLTLNFPF. Residues 56–455 lie on the Lumenal side of the membrane; the sequence is TIEFTASIPR…QARDNVVVSL (400 aa). Asn70, Asn169, Asn230, Asn390, and Asn426 each carry an N-linked (GlcNAc...) asparagine glycan.

It belongs to the glycosyltransferase 47 family. As to expression, expressed in roots and hypocotyls.

It localises to the golgi apparatus membrane. Its function is as follows. Functions in xyloglucan synthesis by adding side chains to the xylosylated glucan backbone. Involved in the galactosylation of hemicellulose xyloglucan. The protein is Probable xyloglucan galactosyltransferase GT17 of Arabidopsis thaliana (Mouse-ear cress).